A 270-amino-acid polypeptide reads, in one-letter code: Protein-ADP-ribose hydrolase (270 aa).

Residues 73-267 enclose the Macro domain; that stretch reads VSVKDCQKTN…LYDTYLQKEN (195 aa). Positions 92, 93, and 106 each coordinate ADP-D-ribose. Zn(2+) is bound by residues cysteine 112, histidine 117, and cysteine 119. The ADP-D-ribose site is built by cysteine 119, isoleucine 120, aspartate 121, serine 212, threonine 213, glycine 214, glutamate 215, and phenylalanine 216.

Belongs to the MacroD-type family. Zn-Macro subfamily. Zn(2+) serves as cofactor.

The enzyme catalyses 4-O-(ADP-D-ribosyl)-L-aspartyl-[protein] + H2O = L-aspartyl-[protein] + ADP-D-ribose + H(+). Its function is as follows. ADP-ribosylhydrolase that specifically reverses the SirTM-mediated mono-ADP-ribosylation at an asparatate residue of GcvH-L, by releasing ADP-ribose from the target protein. May play a role in the regulation of the response to host-induced oxidative stress. This Streptococcus pyogenes serotype M3 (strain ATCC BAA-595 / MGAS315) protein is Protein-ADP-ribose hydrolase.